Reading from the N-terminus, the 295-residue chain is MGKLATLNGILKDEASQMKLNVVHLCSSVNAKTIDLALLKATSHTSNNPPSDKYVTFLQSTIDTCYGPDTVDAILHRLRVTTDVCVAAKCLILLHKMVKSESGYNGEDSLRNNINHRTLIYTQGGSNLKLNDLNVNSSRFTRELTPWVQWYKQYLDCYLSIAEVLGITPNIKEKNEDKRLETQRVSSYPMDCILKQIDFLVELFEHISDRPKAPQSKLNKIVIEMTELMVQDYFSAIRLMRIRFEELNVRVAKPNELVPVLEKLENCKEGLSEFSWRSKYLIADFWYLVSKLKDM.

The region spanning 26–169 is the ENTH domain; it reads CSSVNAKTID…SIAEVLGITP (144 aa).

It localises to the membrane. The protein resides in the clathrin-coated pit. Its subcellular location is the golgi apparatus. The protein localises to the cytoplasmic vesicle. It is found in the clathrin-coated vesicle. The polypeptide is Putative clathrin assembly protein At5g65370 (Arabidopsis thaliana (Mouse-ear cress)).